The chain runs to 339 residues: Ketol-acid reductoisomerase (NADP(+)) (339 aa).

The 182-residue stretch at 1–182 folds into the KARI N-terminal Rossmann domain; it reads MRVYYDRDAD…GGGRSGIIET (182 aa). NADP(+)-binding positions include 24-27, Lys48, Ser51, Thr53, and 83-86; these read YGSQ and DELQ. Residue His108 is part of the active site. Gly134 is a binding site for NADP(+). In terms of domain architecture, KARI C-terminal knotted spans 183–328; the sequence is NFREECETDL…AKLRGMMPWI (146 aa). Residues Asp191, Glu195, Glu227, and Glu231 each coordinate Mg(2+). Ser252 provides a ligand contact to substrate.

The protein belongs to the ketol-acid reductoisomerase family. Requires Mg(2+) as cofactor.

It catalyses the reaction (2R)-2,3-dihydroxy-3-methylbutanoate + NADP(+) = (2S)-2-acetolactate + NADPH + H(+). The catalysed reaction is (2R,3R)-2,3-dihydroxy-3-methylpentanoate + NADP(+) = (S)-2-ethyl-2-hydroxy-3-oxobutanoate + NADPH + H(+). It functions in the pathway amino-acid biosynthesis; L-isoleucine biosynthesis; L-isoleucine from 2-oxobutanoate: step 2/4. Its pathway is amino-acid biosynthesis; L-valine biosynthesis; L-valine from pyruvate: step 2/4. Functionally, involved in the biosynthesis of branched-chain amino acids (BCAA). Catalyzes an alkyl-migration followed by a ketol-acid reduction of (S)-2-acetolactate (S2AL) to yield (R)-2,3-dihydroxy-isovalerate. In the isomerase reaction, S2AL is rearranged via a Mg-dependent methyl migration to produce 3-hydroxy-3-methyl-2-ketobutyrate (HMKB). In the reductase reaction, this 2-ketoacid undergoes a metal-dependent reduction by NADPH to yield (R)-2,3-dihydroxy-isovalerate. The chain is Ketol-acid reductoisomerase (NADP(+)) from Rhizobium rhizogenes (strain K84 / ATCC BAA-868) (Agrobacterium radiobacter).